A 142-amino-acid polypeptide reads, in one-letter code: Translation initiation factor 2 subunit beta (142 aa).

It belongs to the eIF-2-beta/eIF-5 family. As to quaternary structure, heterotrimer composed of an alpha, a beta and a gamma chain.

EIF-2 functions in the early steps of protein synthesis by forming a ternary complex with GTP and initiator tRNA. The chain is Translation initiation factor 2 subunit beta from Methanosphaera stadtmanae (strain ATCC 43021 / DSM 3091 / JCM 11832 / MCB-3).